Here is a 133-residue protein sequence, read N- to C-terminus: Aspartate 1-decarboxylase (133 aa).

The active-site Schiff-base intermediate with substrate; via pyruvic acid is S26. Position 26 is a pyruvic acid (Ser) (S26). Residue T58 coordinates substrate. Catalysis depends on Y59, which acts as the Proton donor. Substrate is bound at residue 74 to 76 (GAA).

It belongs to the PanD family. Heterooctamer of four alpha and four beta subunits. Requires pyruvate as cofactor. Post-translationally, is synthesized initially as an inactive proenzyme, which is activated by self-cleavage at a specific serine bond to produce a beta-subunit with a hydroxyl group at its C-terminus and an alpha-subunit with a pyruvoyl group at its N-terminus.

Its subcellular location is the cytoplasm. The enzyme catalyses L-aspartate + H(+) = beta-alanine + CO2. The protein operates within cofactor biosynthesis; (R)-pantothenate biosynthesis; beta-alanine from L-aspartate: step 1/1. In terms of biological role, catalyzes the pyruvoyl-dependent decarboxylation of aspartate to produce beta-alanine. This Legionella pneumophila (strain Paris) protein is Aspartate 1-decarboxylase.